Here is a 362-residue protein sequence, read N- to C-terminus: 3-isopropylmalate dehydrogenase (362 aa).

78-91 (GYKWDSLPPHQRPE) is a binding site for NAD(+). R98, R108, R136, and D226 together coordinate substrate. Mg(2+) is bound by residues D226, D250, and D254. NAD(+) is bound at residue 284–296 (GSAPDIAGQDKAN).

It belongs to the isocitrate and isopropylmalate dehydrogenases family. LeuB type 1 subfamily. Homodimer. Requires Mg(2+) as cofactor. Mn(2+) serves as cofactor.

The protein resides in the cytoplasm. It carries out the reaction (2R,3S)-3-isopropylmalate + NAD(+) = 4-methyl-2-oxopentanoate + CO2 + NADH. The protein operates within amino-acid biosynthesis; L-leucine biosynthesis; L-leucine from 3-methyl-2-oxobutanoate: step 3/4. Its function is as follows. Catalyzes the oxidation of 3-carboxy-2-hydroxy-4-methylpentanoate (3-isopropylmalate) to 3-carboxy-4-methyl-2-oxopentanoate. The product decarboxylates to 4-methyl-2 oxopentanoate. The polypeptide is 3-isopropylmalate dehydrogenase (Nostoc sp. (strain PCC 7120 / SAG 25.82 / UTEX 2576)).